The primary structure comprises 164 residues: Kunitz-type trypsin inhibitor BrTI (164 aa).

The protein belongs to the leguminous Kunitz-type inhibitor family.

Functionally, inhibitor of trypsin and human plasma kallikrein with a Ki of 2.9 nM and 14.0 nM, respectively. Does not inhibit chymotrypsin, porcine pancreatic elastas, human neutrophil elastase, coagulation factor Xa, human thrombin, porcine pancreatic kallikrein or plasmin. This Bauhinia rufa (Orchid tree) protein is Kunitz-type trypsin inhibitor BrTI.